The sequence spans 456 residues: Chromosomal replication initiator protein DnaA (456 aa).

Positions 1-83 are domain I, interacts with DnaA modulators; that stretch reads MKLKILHFTS…DAFEEESNNG (83 aa). The segment at 83-116 is domain II; sequence GVRPEIHIKVKEKKENVKSLKNNKSMLYFNTNGL. The tract at residues 117–331 is domain III, AAA+ region; that stretch reads SLNPFYTFEN…GILSTINAHI (215 aa). The ATP site is built by G161, G163, K164, and T165. The interval 332–456 is domain IV, binds dsDNA; that stretch reads NLSPESSSLK…SKIQQSLDSV (125 aa).

It belongs to the DnaA family. In terms of assembly, oligomerizes as a right-handed, spiral filament on DNA at oriC.

It is found in the cytoplasm. Plays an essential role in the initiation and regulation of chromosomal replication. ATP-DnaA binds to the origin of replication (oriC) to initiate formation of the DNA replication initiation complex once per cell cycle. Binds the DnaA box (a 9 base pair repeat at the origin) and separates the double-stranded (ds)DNA. Forms a right-handed helical filament on oriC DNA; dsDNA binds to the exterior of the filament while single-stranded (ss)DNA is stabiized in the filament's interior. The ATP-DnaA-oriC complex binds and stabilizes one strand of the AT-rich DNA unwinding element (DUE), permitting loading of DNA polymerase. After initiation quickly degrades to an ADP-DnaA complex that is not apt for DNA replication. Binds acidic phospholipids. This chain is Chromosomal replication initiator protein DnaA, found in Helicobacter hepaticus (strain ATCC 51449 / 3B1).